The sequence spans 572 residues: Butyrate--CoA ligase AAE11, peroxisomal (572 aa).

The Microbody targeting signal motif lies at 570-572; that stretch reads SRL.

It belongs to the ATP-dependent AMP-binding enzyme family. Expressed in flowers.

Its subcellular location is the peroxisome. It carries out the reaction a medium-chain fatty acid + ATP + CoA = a medium-chain fatty acyl-CoA + AMP + diphosphate. Functionally, butyrate--CoA ligase that is active in vitro with medium-chain fatty acids, with a preference for hexanoate and octanoate. The protein is Butyrate--CoA ligase AAE11, peroxisomal (AAE11) of Arabidopsis thaliana (Mouse-ear cress).